The chain runs to 424 residues: MFTIITGAQFGDEGKGKIVDLLAKDYDIVARFQGGNNAGHTVRVGDEVYKLHLIPSGILLDARVLIGPGVVLNPEVLAEETAMFEKHGIKVDAEKLGVDAKTSIIMPYHIEMDGLREAARKTKIGTTKRGIGYAYIDKVARDEIRMAELVDKERFLKRLEELAPQKEKEIEAMGGDPKIVRDPFLIQKYLELGEQFASYVTDVSREINQALDEGKHVMAEAAQGTHLDVIHGTQKFVTSSSTIAGSACANLGVGPTRVGNVIAIVKAYITRVGEGPLPTELSGELGEKIQKAGGEFGTTTGRGRRCGWFDLPLLKKAIALNGYTEISLTKLDVLTGLEPLRICVGYKYKGEDLDYPPELTEDLWECSPVYEDLPGWETDLTEVKAYSELPENAQNYIKRLEELMKVPINYISVGPGREQTFKKE.

Residues 11-17 (GDEGKGK) and 39-41 (GHT) each bind GTP. Asp-12 functions as the Proton acceptor in the catalytic mechanism. Residues Asp-12 and Gly-39 each coordinate Mg(2+). Residues 12–15 (DEGK), 37–40 (NAGH), Thr-127, Arg-141, Gln-223, Thr-238, and Arg-302 each bind IMP. His-40 acts as the Proton donor in catalysis. A substrate-binding site is contributed by 298-304 (TTTGRGR). GTP is bound by residues Arg-304, 330–332 (KLD), and 412–414 (SVG).

This sequence belongs to the adenylosuccinate synthetase family. As to quaternary structure, homodimer. The cofactor is Mg(2+).

It localises to the cytoplasm. The catalysed reaction is IMP + L-aspartate + GTP = N(6)-(1,2-dicarboxyethyl)-AMP + GDP + phosphate + 2 H(+). Its pathway is purine metabolism; AMP biosynthesis via de novo pathway; AMP from IMP: step 1/2. In terms of biological role, plays an important role in the de novo pathway of purine nucleotide biosynthesis. Catalyzes the first committed step in the biosynthesis of AMP from IMP. This is Adenylosuccinate synthetase 2 from Methanosarcina acetivorans (strain ATCC 35395 / DSM 2834 / JCM 12185 / C2A).